Consider the following 431-residue polypeptide: NADH-quinone oxidoreductase subunit D 2 (431 aa).

A disordered region spans residues 1–37; that stretch reads MSEAKGVGGIDPRATPGSAGAGERPPMGTLSPRAGEG.

It belongs to the complex I 49 kDa subunit family. As to quaternary structure, NDH-1 is composed of 14 different subunits. Subunits NuoB, C, D, E, F, and G constitute the peripheral sector of the complex.

Its subcellular location is the cell inner membrane. It carries out the reaction a quinone + NADH + 5 H(+)(in) = a quinol + NAD(+) + 4 H(+)(out). In terms of biological role, NDH-1 shuttles electrons from NADH, via FMN and iron-sulfur (Fe-S) centers, to quinones in the respiratory chain. The immediate electron acceptor for the enzyme in this species is believed to be ubiquinone. Couples the redox reaction to proton translocation (for every two electrons transferred, four hydrogen ions are translocated across the cytoplasmic membrane), and thus conserves the redox energy in a proton gradient. This is NADH-quinone oxidoreductase subunit D 2 from Anaeromyxobacter sp. (strain K).